A 160-amino-acid chain; its full sequence is Negative modulator of initiation of replication (160 aa).

It belongs to the SeqA family. Homodimer. Polymerizes to form helical filaments.

Its subcellular location is the cytoplasm. Its function is as follows. Negative regulator of replication initiation, which contributes to regulation of DNA replication and ensures that replication initiation occurs exactly once per chromosome per cell cycle. Binds to pairs of hemimethylated GATC sequences in the oriC region, thus preventing assembly of replication proteins and re-initiation at newly replicated origins. Repression is relieved when the region becomes fully methylated. This Idiomarina loihiensis (strain ATCC BAA-735 / DSM 15497 / L2-TR) protein is Negative modulator of initiation of replication.